The following is a 313-amino-acid chain: Olfactory receptor 10P1 (313 aa).

The Extracellular segment spans residues 1-25 (MAGENHTTLPEFLLLGFSDLKALQG). N5 carries an N-linked (GlcNAc...) asparagine glycan. A helical transmembrane segment spans residues 26 to 46 (PLFWVVLLVYLVTLLGNSLII). Residues 47–54 (LLTQVSPA) are Cytoplasmic-facing. Residues 55–75 (LHSPMYFFLRQLSVVELFYTT) form a helical membrane-spanning segment. The Extracellular segment spans residues 76–100 (DIVPRTLANLGSPHPQAISFQGCAA). Residues 101–121 (QMYVFIVLGISECCLLTAMAY) traverse the membrane as a helical segment. The Cytoplasmic segment spans residues 122 to 140 (DRYVAICQPLRYSTLLSPR). Residues 141-161 (ACMAMVGTSWLTGIITATTHA) form a helical membrane-spanning segment. The Extracellular segment spans residues 162–198 (SLIFSLPFRSHPIIPHFLCDILPVLRLASAGKHRSEI). A helical membrane pass occupies residues 199–218 (SVMTATIVFIMIPFSLIVTS). At 219-238 (YIRILGAILAMASTQSRRKV) the chain is on the cytoplasmic side. Residues 239 to 259 (FSTCSSHLLVVSLFFGTASIT) traverse the membrane as a helical segment. Residues 260–272 (YIRPQAGSSVTTD) lie on the Extracellular side of the membrane. Residues 273 to 293 (RVLSLFYTVITPMLNPIIYTL) traverse the membrane as a helical segment. Residues 294 to 313 (RNKDVRRALRHLVKRQRPSP) are Cytoplasmic-facing.

This sequence belongs to the G-protein coupled receptor 1 family.

Its subcellular location is the cell membrane. Its function is as follows. Odorant receptor. In Homo sapiens (Human), this protein is Olfactory receptor 10P1 (OR10P1).